A 616-amino-acid chain; its full sequence is Hemagglutinin-neuraminidase (616 aa).

At 1–26 (MDRAVSQVALENDEREAKNTWRLVFR) the chain is on the intravirion side. Residues 27–47 (IAILLLTVVTLAISAAALAYS) traverse the membrane as a helical segment. The Virion surface segment spans residues 48-616 (MEASTPSDLI…ELESYAASWP (569 aa)). The N-linked (GlcNAc...) asparagine; by host glycan is linked to N119. The interval 124–152 (GAPIHDPDYIGGIGKELIVDDASDVTSFY) is important for interaction with fusion/F protein. 3 disulfide bridges follow: C172-C196, C186-C247, and C238-C251. Residues 234–239 (NRKSCS) are involved in neuraminidase activity. Residues N341 and N433 are each glycosylated (N-linked (GlcNAc...) asparagine; by host). 2 disulfide bridges follow: C344–C461 and C455–C465. Residues N481, N538, and N600 are each glycosylated (N-linked (GlcNAc...) asparagine; by host). A disulfide bridge links C531 with C542.

The protein belongs to the paramyxoviruses hemagglutinin-neuraminidase family. In terms of assembly, homotetramer; composed of disulfide-linked homodimers. Interacts with F protein trimer. Interacts with host CG-1B; this interaction inhibits viral adsorption and replication rather than internalization.

Its subcellular location is the virion membrane. It is found in the host cell membrane. The enzyme catalyses Hydrolysis of alpha-(2-&gt;3)-, alpha-(2-&gt;6)-, alpha-(2-&gt;8)- glycosidic linkages of terminal sialic acid residues in oligosaccharides, glycoproteins, glycolipids, colominic acid and synthetic substrates.. Its function is as follows. Mediates the viral entry into the host cell together with fusion/F protein. Attaches the virus to sialic acid-containing cell receptors and thereby initiates infection. Binding of HN protein to the receptor induces a conformational change that allows the F protein to trigger virion/cell membranes fusion. Functionally, neuraminidase activity ensures the efficient spread of the virus by dissociating the mature virions from the neuraminic acid containing glycoproteins. The polypeptide is Hemagglutinin-neuraminidase (HN) (Newcastle disease virus (strain Chicken/Northern Ireland/Ulster/67) (NDV)).